We begin with the raw amino-acid sequence, 262 residues long: Proliferating cell nuclear antigen (262 aa).

Residues 61–80 mediate DNA binding; that stretch reads RCDRNIAMGVNLNSMSKILK. K164 participates in a covalent cross-link: Glycyl lysine isopeptide (Lys-Gly) (interchain with G-Cter in ubiquitin).

This sequence belongs to the PCNA family. As to quaternary structure, homotrimer. Forms a complex with activator 1 heteropentamer in the presence of ATP. Component of the replisome complex. Post-translationally, monoubiquitinated by the UBE2B-RAD18 complex on Lys-164. Monoubiquitination at Lys-164 also takes place in undamaged proliferating cells, and is mediated by the DCX(DTL) complex, leading to enhance PCNA-dependent translesion DNA synthesis.

It is found in the nucleus. This protein is an auxiliary protein of DNA polymerase delta and is involved in the control of eukaryotic DNA replication by increasing the polymerase's processibility during elongation of the leading strand. The polypeptide is Proliferating cell nuclear antigen (PCNA) (Coturnix japonica (Japanese quail)).